The following is a 256-amino-acid chain: 1-(5-phosphoribosyl)-5-[(5-phosphoribosylamino)methylideneamino] imidazole-4-carboxamide isomerase (256 aa).

Residue aspartate 8 is the Proton acceptor of the active site. The active-site Proton donor is the aspartate 129.

It belongs to the HisA/HisF family.

It is found in the cytoplasm. It catalyses the reaction 1-(5-phospho-beta-D-ribosyl)-5-[(5-phospho-beta-D-ribosylamino)methylideneamino]imidazole-4-carboxamide = 5-[(5-phospho-1-deoxy-D-ribulos-1-ylimino)methylamino]-1-(5-phospho-beta-D-ribosyl)imidazole-4-carboxamide. It functions in the pathway amino-acid biosynthesis; L-histidine biosynthesis; L-histidine from 5-phospho-alpha-D-ribose 1-diphosphate: step 4/9. The polypeptide is 1-(5-phosphoribosyl)-5-[(5-phosphoribosylamino)methylideneamino] imidazole-4-carboxamide isomerase (Prochlorococcus marinus (strain NATL1A)).